Here is a 489-residue protein sequence, read N- to C-terminus: Lysine--tRNA ligase (489 aa).

Mg(2+)-binding residues include glutamate 399 and glutamate 406.

Belongs to the class-II aminoacyl-tRNA synthetase family. Homodimer. Mg(2+) serves as cofactor.

Its subcellular location is the cytoplasm. It carries out the reaction tRNA(Lys) + L-lysine + ATP = L-lysyl-tRNA(Lys) + AMP + diphosphate. The sequence is that of Lysine--tRNA ligase (lysS) from Mycoplasma pneumoniae (strain ATCC 29342 / M129 / Subtype 1) (Mycoplasmoides pneumoniae).